We begin with the raw amino-acid sequence, 508 residues long: WD repeat-containing protein JIP5 (508 aa).

6 WD repeats span residues 62-105, 106-145, 149-188, 193-233, 253-294, and 345-382; these read EARK…WRTK, RHKG…VVKK, DGGS…TKNT, HGGD…MKQP, DQED…LEDQ, and SGLD…NSDS. The tract at residues 376–508 is disordered; the sequence is KEENSDSDSD…SHGITKFDGL (133 aa). Over residues 380–393 the composition is skewed to acidic residues; that stretch reads SDSDSDSDINDDSE. The span at 407 to 419 shows a compositional bias: low complexity; the sequence is ELGSGSESEVESD. A WD 7 repeat occupies 431–472; that stretch reads CTGSDLPGDIEGSEGENNSNDDDNHDDREELWKELDQPTSDE. Residues 441 to 454 show a composition bias toward acidic residues; sequence EGSEGENNSNDDDN. Positions 455-466 are enriched in basic and acidic residues; it reads HDDREELWKELD. Basic residues predominate over residues 478-492; that stretch reads KRSLKVKDKKNKKFK.

This sequence belongs to the WD repeat WDR55 family.

Its subcellular location is the nucleus. It is found in the nucleolus. This Candida glabrata (strain ATCC 2001 / BCRC 20586 / JCM 3761 / NBRC 0622 / NRRL Y-65 / CBS 138) (Yeast) protein is WD repeat-containing protein JIP5 (JIP5).